Reading from the N-terminus, the 512-residue chain is Probable malate:quinone oxidoreductase (512 aa).

The protein belongs to the MQO family. FAD serves as cofactor.

It catalyses the reaction (S)-malate + a quinone = a quinol + oxaloacetate. It participates in carbohydrate metabolism; tricarboxylic acid cycle; oxaloacetate from (S)-malate (quinone route): step 1/1. The chain is Probable malate:quinone oxidoreductase from Bradyrhizobium diazoefficiens (strain JCM 10833 / BCRC 13528 / IAM 13628 / NBRC 14792 / USDA 110).